The following is a 165-amino-acid chain: Pro-MCH (165 aa).

An N-terminal signal peptide occupies residues 1 to 21; sequence MAKMSLSSYMLMLAFSLFSHG. The segment covering 69-82 has biased composition (basic and acidic residues); it reads DESGFMKDDDDKTT. A disordered region spans residues 69-89; sequence DESGFMKDDDDKTTKNTGSKQ. I143 bears the Isoleucine amide mark. A disulfide bridge links C153 with C162.

This sequence belongs to the melanin-concentrating hormone family. Pro-MCH is processed differentially in the brain and in peripheral organs producing two neuropeptides; NEI and MCH. A third peptide, NGE, may also be produced. Preferential processing in neurons by prohormone convertase 2 (PC2) generates NEI. MCH is generated in neurons of the lateral hypothalmic area by several prohormone convertases including PC1/3, PC2 and PC5/6. MCH is present in all regions of the brain and in neurointermediate lobe of the pituarity gland, with highest concentrations in the hypothalamus. Also expressed to a much lesser extent in stomach, lamina propria of both duodenum and colon, ovary, thymus, pancreas, adrenal gland and testis (spermatogonia, early spermatocytes and Sertoli cells). Weak expression in heart and lung. The other peptides are expressed at least in Sertoli cells, nei being also expressed in brain, stomach and proximal duodenum. In brain exclusively mature mch and nei peptides are present. In peripheral tissues a large product, encompassing the NEI and MCH domains of the precursor, is found predominantly. At low levels fully processed MCH and NEI peptides are present in gut. No expression in peripheral blood.

It is found in the secreted. In terms of biological role, MCH inhibits ACTH secretion at the end of the light on period which corresponds to the peak of the circadian rhythm in ACTH. Inhibits also stress induced ACTH release during the light off period of the cycle. Involved as a neurotransmitter or neuromodulator in a broad array of neuronal functions. Stimulates sexual behavior when injected into the ventromedial nucleus, this effect is antagonized by NEI. In the medial preoptic area, stimulates anxiety and sexual behavior. Antagonizes inhibitory effect of melanotropin alpha on exploration behavior. NEI can influence differentiation of neuronal processes in brain neurons. Affects the content of neurofilament protein in neuritogenesis (in vitro). May also be a neuromodulatory factor. In behavioral tests, it stimulates exploration and anxiety when injected into the ventromedial nucleus. Also stimulates grooming, locomotion and rearing. May antagonize the inhibitory effect of mch on ACTH release. Reduces dopamine and dopac release in the ventromedial nucleus. In Rattus norvegicus (Rat), this protein is Pro-MCH (Pmch).